A 240-amino-acid polypeptide reads, in one-letter code: tRNA (guanine-N(1)-)-methyltransferase (240 aa).

S-adenosyl-L-methionine contacts are provided by residues G108 and 127–132 (IGDYVL).

This sequence belongs to the RNA methyltransferase TrmD family. As to quaternary structure, homodimer.

The protein localises to the cytoplasm. It catalyses the reaction guanosine(37) in tRNA + S-adenosyl-L-methionine = N(1)-methylguanosine(37) in tRNA + S-adenosyl-L-homocysteine + H(+). Its function is as follows. Specifically methylates guanosine-37 in various tRNAs. The protein is tRNA (guanine-N(1)-)-methyltransferase of Lactobacillus johnsonii (strain CNCM I-12250 / La1 / NCC 533).